We begin with the raw amino-acid sequence, 281 residues long: Apolipoprotein Eb (281 aa).

Positions 1–18 (MRSLVVFFALAVLTGCQA) are cleaved as a signal peptide. A propeptide spanning residues 19–24 (RSLFQA) is cleaved from the precursor. Positions 34-66 (MVDRFWQYVSELNTQTDGMVQNIKGSQLSRELD) are 3 X approximate tandem repeats. 9 tandem repeats follow at residues 67–88 (TLIT…TQMT), 89–110 (PYAS…GKLQ), 111–132 (TDMT…TMME), 133–154 (QNAD…KRLN), 155–176 (KDTE…SRAS), 177–199 (QNAD…GATQ), 200–227 (KLGA…GALK), 228–249 (EKLE…DELT), and 254–281 (PYSQ…PTQA). The segment at 67–281 (TLITDTMAEL…EATAALPTQA (215 aa)) is 9 X 22 AA approximate tandem repeats.

The protein belongs to the apolipoprotein A1/A4/E family. As to quaternary structure, homotetramer.

It localises to the secreted. The protein resides in the extracellular space. Its subcellular location is the extracellular matrix. In terms of biological role, APOE is an apolipoprotein, a protein associating with lipid particles, that mainly functions in lipoprotein-mediated lipid transport between organs via the plasma and interstitial fluids. APOE is a core component of plasma lipoproteins and is involved in their production, conversion and clearance. Apolipoproteins are amphipathic molecules that interact both with lipids of the lipoprotein particle core and the aqueous environment of the plasma. The protein is Apolipoprotein Eb (apoeb) of Danio rerio (Zebrafish).